The sequence spans 122 residues: Large ribosomal subunit protein uL14 (122 aa).

This sequence belongs to the universal ribosomal protein uL14 family. In terms of assembly, part of the 50S ribosomal subunit. Forms a cluster with proteins L3 and L19. In the 70S ribosome, L14 and L19 interact and together make contacts with the 16S rRNA in bridges B5 and B8.

Its function is as follows. Binds to 23S rRNA. Forms part of two intersubunit bridges in the 70S ribosome. The chain is Large ribosomal subunit protein uL14 from Christiangramia forsetii (strain DSM 17595 / CGMCC 1.15422 / KT0803) (Gramella forsetii).